Reading from the N-terminus, the 583-residue chain is Long-chain-fatty-acid--AMP ligase FadD26 (583 aa).

The protein belongs to the ATP-dependent AMP-binding enzyme family.

The enzyme catalyses holo-[(phenol)carboxyphthiodiolenone synthase] + a long-chain fatty acid + ATP = a long-chain fatty acyl-[(phenol)carboxyphthiodiolenone synthase] + AMP + diphosphate. It catalyses the reaction eicosanoate + holo-[(phenol)carboxyphthiodiolenone synthase] + ATP = icosanoyl-[(phenol)carboxyphthiodiolenone synthase] + AMP + diphosphate. It carries out the reaction holo-[(phenol)carboxyphthiodiolenone synthase] + docosanoate + ATP = docosanoyl-[(phenol)carboxyphthiodiolenone synthase] + AMP + diphosphate. It functions in the pathway lipid metabolism; fatty acid biosynthesis. Functionally, catalyzes the activation of long-chain fatty acids as acyl-adenylates (acyl-AMP), which are then transferred to the multifunctional polyketide synthase PpsA for further chain extension. Catalyzes the adenylation of the long-chain fatty acids eicosanoate (C20) or docosanoate (C22), and potentially the very-long-chain fatty acid lignocerate (C24). Involved in the biosynthesis of phthiocerol dimycocerosate (DIM A) and phthiodiolone dimycocerosate (DIM B). This chain is Long-chain-fatty-acid--AMP ligase FadD26 (fadD26), found in Mycobacterium bovis (strain ATCC BAA-935 / AF2122/97).